The sequence spans 233 residues: uncharacterized protein (233 aa).

Transmembrane regions (helical) follow at residues 78-98 (FCLIIISSWAVLPVPGGPVMY), 113-133 (FITCSYSAVLAGNAPSLLFKL), and 188-208 (FLLIRLVGVIGIADMNVYGTI).

It localises to the membrane. This is an uncharacterized protein from Saccharomyces cerevisiae (strain ATCC 204508 / S288c) (Baker's yeast).